Reading from the N-terminus, the 152-residue chain is Putative pre-16S rRNA nuclease (152 aa).

Belongs to the YqgF nuclease family.

Its subcellular location is the cytoplasm. In terms of biological role, could be a nuclease involved in processing of the 5'-end of pre-16S rRNA. The protein is Putative pre-16S rRNA nuclease of Sphingopyxis alaskensis (strain DSM 13593 / LMG 18877 / RB2256) (Sphingomonas alaskensis).